The sequence spans 166 residues: Peroxynitrite isomerase Rv2717c (166 aa).

The GXWXGXG motif lies at 28 to 34; sequence GTWRGQG. Heme b is bound by residues Thr-40 and His-158.

Belongs to the nitrobindin family. As to quaternary structure, homodimer. Requires heme b as cofactor.

Its subcellular location is the cytoplasm. The enzyme catalyses peroxynitrite = nitrate. It functions in the pathway nitrogen metabolism. Heme-binding protein able to scavenge peroxynitrite and to protect free L-tyrosine against peroxynitrite-mediated nitration, by acting as a peroxynitrite isomerase that converts peroxynitrite to nitrate. Therefore, this protein likely plays a role in peroxynitrite sensing and in the detoxification of reactive nitrogen and oxygen species (RNS and ROS, respectively). Is able to bind nitric oxide (NO) in vitro, but may act as a sensor of peroxynitrite levels in vivo. The sequence is that of Peroxynitrite isomerase Rv2717c from Arabidopsis thaliana (Mouse-ear cress).